The sequence spans 604 residues: Elongation factor 4 (604 aa).

The 183-residue stretch at 8–190 (DKIRNFSIIA…AIVNRLPPPR (183 aa)) folds into the tr-type G domain. GTP-binding positions include 20-25 (DHGKST) and 137-140 (NKID).

It belongs to the TRAFAC class translation factor GTPase superfamily. Classic translation factor GTPase family. LepA subfamily.

It localises to the cell inner membrane. It catalyses the reaction GTP + H2O = GDP + phosphate + H(+). In terms of biological role, required for accurate and efficient protein synthesis under certain stress conditions. May act as a fidelity factor of the translation reaction, by catalyzing a one-codon backward translocation of tRNAs on improperly translocated ribosomes. Back-translocation proceeds from a post-translocation (POST) complex to a pre-translocation (PRE) complex, thus giving elongation factor G a second chance to translocate the tRNAs correctly. Binds to ribosomes in a GTP-dependent manner. This is Elongation factor 4 from Hyphomonas neptunium (strain ATCC 15444).